The chain runs to 450 residues: Signal recognition particle 54 kDa protein (450 aa).

Residues glycine 107 to threonine 114, aspartate 188 to arginine 192, and threonine 247 to aspartate 250 each bind GTP.

Belongs to the GTP-binding SRP family. SRP54 subfamily. In terms of assembly, part of the signal recognition particle protein translocation system, which is composed of SRP and FtsY. Archaeal SRP consists of a 7S RNA molecule of 300 nucleotides and two protein subunits: SRP54 and SRP19.

The protein localises to the cytoplasm. The enzyme catalyses GTP + H2O = GDP + phosphate + H(+). Involved in targeting and insertion of nascent membrane proteins into the cytoplasmic membrane. Binds to the hydrophobic signal sequence of the ribosome-nascent chain (RNC) as it emerges from the ribosomes. The SRP-RNC complex is then targeted to the cytoplasmic membrane where it interacts with the SRP receptor FtsY. The chain is Signal recognition particle 54 kDa protein from Methanococcus maripaludis (strain DSM 14266 / JCM 13030 / NBRC 101832 / S2 / LL).